A 266-amino-acid chain; its full sequence is 5'-nucleotidase SurE (266 aa).

The a divalent metal cation site is built by Asp-8, Asp-9, Ser-39, and Asn-93.

This sequence belongs to the SurE nucleotidase family. Requires a divalent metal cation as cofactor.

The protein resides in the cytoplasm. The catalysed reaction is a ribonucleoside 5'-phosphate + H2O = a ribonucleoside + phosphate. Nucleotidase that shows phosphatase activity on nucleoside 5'-monophosphates. The chain is 5'-nucleotidase SurE from Thermococcus gammatolerans (strain DSM 15229 / JCM 11827 / EJ3).